The following is a 459-amino-acid chain: XK-related protein 3 (459 aa).

The next 10 helical transmembrane spans lie at 35–55, 68–88, 97–117, 169–189, 199–219, 238–258, 264–284, 300–320, 345–365, and 377–397; these read FSIIFSTVLYCGEVAFGLYMF, SFTISFIIVGAILDQIILMFF, AALLFWHILLLGPIVRCLHTI, IQAFLGSVPQLILQMYISLTI, LMTFSLLSVTYGAIRCNILAI, VVMWRFLEVISRVVTLAFFIA, SLPVLLIIYFVSLLAPWLEFW, MVGTVLMLFLITLLYAAINFS, ILHYSFQFLENVIMILVFRFF, and LIAVQLIISYLLATGFMLLFY.

This sequence belongs to the XK family. As to expression, expressed predominantly, if not exclusively, in testis.

It localises to the cell membrane. The protein is XK-related protein 3 (XKR3) of Homo sapiens (Human).